A 539-amino-acid polypeptide reads, in one-letter code: Acid-sensing ion channel 4 (539 aa).

Residues 1–68 (MPIEIVCKIK…GPGPHGLRRT (68 aa)) lie on the Cytoplasmic side of the membrane. A helical membrane pass occupies residues 69–89 (LWVLALLTSLAAFLYQAASLA). The Extracellular segment spans residues 90 to 438 (RGYLTRPHLV…EQRAAYGLSA (349 aa)). 2 cysteine pairs are disulfide-bonded: cysteine 118–cysteine 202 and cysteine 180–cysteine 187. Asparagine 191, asparagine 243, asparagine 341, and asparagine 376 each carry an N-linked (GlcNAc...) asparagine glycan. 5 disulfide bridges follow: cysteine 296-cysteine 375, cysteine 318-cysteine 371, cysteine 322-cysteine 369, cysteine 331-cysteine 353, and cysteine 333-cysteine 345. A helical membrane pass occupies residues 439–459 (LLGDLGGQMGLFIGASILTLL). The GAS motif; ion selectivity filter motif lies at 452–454 (GAS). Over 460-539 (EILDYIYEVS…PGSLFEDFAC (80 aa)) the chain is Cytoplasmic. The tract at residues 501 to 531 (EQSPCPNRGRAEGGGASNLLPNHHHPHGPPG) is disordered.

It belongs to the amiloride-sensitive sodium channel (TC 1.A.6) family. ASIC4 subfamily. In terms of assembly, homotrimer. Heterotrimer; with other ASIC proteins producing functional channels. In terms of tissue distribution, expressed in brain, spinal cord and dorsal root ganglion (DRG). Expressed by a subset of sensory neurons in the DRG. Expressed by granule cells in the cerebellar cortex. In hippocampus, expression is detected in dentate gyrus granule cells, in pyramidal cells of CA1-CA3 subfields and in interneurons of the striatum oriens and radiatum of all subfields. In cerebral cortex expressed in small, medium and large pyramidal cells in layers 2, 3 and 5 respectively. Also expressed in striatum, globus pallidus, inferior and superior calliculi, amygdala, magnocellular preoptic nucleus, islands of Calleja and large neurons of olfactory tubercules.

The protein resides in the cell membrane. Does not exhibit measurable stand-alone pH-gated sodium channel activity but may form pH-gated heterotrimeric sodium channels. Its activity could also depend on alternative gating mechanisms. In Rattus norvegicus (Rat), this protein is Acid-sensing ion channel 4.